A 402-amino-acid polypeptide reads, in one-letter code: Formate-dependent phosphoribosylglycinamide formyltransferase (402 aa).

Residues 23-24 and Glu-83 contribute to the N(1)-(5-phospho-beta-D-ribosyl)glycinamide site; that span reads EL. ATP-binding positions include Arg-115, Lys-156, 196–199, and Glu-204; that span reads EEFV. One can recognise an ATP-grasp domain in the interval 120–316; that stretch reads RLAAEKVGVP…EFAIHARAVL (197 aa). Positions 274 and 287 each coordinate Mg(2+). N(1)-(5-phospho-beta-D-ribosyl)glycinamide-binding positions include Asp-294, Lys-364, and 371-372; that span reads RR.

It belongs to the PurK/PurT family. Homodimer.

The enzyme catalyses N(1)-(5-phospho-beta-D-ribosyl)glycinamide + formate + ATP = N(2)-formyl-N(1)-(5-phospho-beta-D-ribosyl)glycinamide + ADP + phosphate + H(+). It functions in the pathway purine metabolism; IMP biosynthesis via de novo pathway; N(2)-formyl-N(1)-(5-phospho-D-ribosyl)glycinamide from N(1)-(5-phospho-D-ribosyl)glycinamide (formate route): step 1/1. In terms of biological role, involved in the de novo purine biosynthesis. Catalyzes the transfer of formate to 5-phospho-ribosyl-glycinamide (GAR), producing 5-phospho-ribosyl-N-formylglycinamide (FGAR). Formate is provided by PurU via hydrolysis of 10-formyl-tetrahydrofolate. The chain is Formate-dependent phosphoribosylglycinamide formyltransferase from Ignicoccus hospitalis (strain KIN4/I / DSM 18386 / JCM 14125).